A 262-amino-acid chain; its full sequence is 3-methyl-2-oxobutanoate hydroxymethyltransferase (262 aa).

Mg(2+) is bound by residues Asp-44 and Asp-83. 3-methyl-2-oxobutanoate contacts are provided by residues 44–45, Asp-83, and Lys-113; that span reads DS. Glu-115 is a binding site for Mg(2+). The active-site Proton acceptor is the Glu-182.

Belongs to the PanB family. In terms of assembly, homodecamer; pentamer of dimers. It depends on Mg(2+) as a cofactor.

It localises to the cytoplasm. It catalyses the reaction 3-methyl-2-oxobutanoate + (6R)-5,10-methylene-5,6,7,8-tetrahydrofolate + H2O = 2-dehydropantoate + (6S)-5,6,7,8-tetrahydrofolate. It participates in cofactor biosynthesis; (R)-pantothenate biosynthesis; (R)-pantoate from 3-methyl-2-oxobutanoate: step 1/2. Its function is as follows. Catalyzes the reversible reaction in which hydroxymethyl group from 5,10-methylenetetrahydrofolate is transferred onto alpha-ketoisovalerate to form ketopantoate. This Picosynechococcus sp. (strain ATCC 27264 / PCC 7002 / PR-6) (Agmenellum quadruplicatum) protein is 3-methyl-2-oxobutanoate hydroxymethyltransferase.